The primary structure comprises 209 residues: PRA1 family protein E (209 aa).

The segment at 1–20 (MNQKPPPYGYGGAGGGGVGP) is disordered. The segment covering 9–19 (GYGGAGGGGVG) has biased composition (gly residues). A run of 3 helical transmembrane segments spans residues 90–110 (IVFL…VVFI), 132–152 (VDDK…LVYT), and 155–175 (GENV…HGAF).

This sequence belongs to the PRA1 family. Interacts with PRA1B1, PRA1B2, PRA1B3, PRA1B4, PRA1B5 and PRA1B6. Expressed in hypocotyls, roots, lateral roots, columella cells, leaves and shoot apex.

Its subcellular location is the endosome membrane. Functionally, may be involved in both secretory and endocytic intracellular trafficking in the endosomal/prevacuolar compartments. This chain is PRA1 family protein E (PRA1E), found in Arabidopsis thaliana (Mouse-ear cress).